The chain runs to 326 residues: MVDYYEVLGVQRHASPEDIKKAYRKLALKWHPDKNPENKEEAERKFKQVAEAYEVLSDAKKRDIYDKYGKEGLNGGGGGGSHFDSPFEFGFTFRNPDDVFREFFGGRDPFSFDFFEDPFEDFFGNRRGPRGSRSRGTGSFFSAFSGFPSFGSGFSSFDTGFTSFGSLGHGGLTSFSSTSFGGSGMGNFKSISTSTKMVNGRKITTKRIVENGQERVEVEEDGQLKSLTINGVADDDALAEERMRRGQNALPAQPAGLRPPKPPRPASLLRHAPHCLSEEEGEQDRPRAPGPWDPLASAAGLKEGGKRKKQKQREESKKKKSTKGNH.

Residues 2–69 (VDYYEVLGVQ…KKRDIYDKYG (68 aa)) form the J domain. The interval 2–146 (VDYYEVLGVQ…TGSFFSAFSG (145 aa)) is interaction with HSP70. The tract at residues 119–242 (FEDFFGNRRG…ADDDALAEER (124 aa)) is interaction with KRT18. Omega-N-methylarginine is present on R135. The interval 249–326 (ALPAQPAGLR…KKKKSTKGNH (78 aa)) is disordered. S277 is subject to Phosphoserine.

Homooligomer. Interacts with BAG3, HSPB8 and STUB1. Interacts with ALKBH1. Interacts with HSP70, KRT18 and PTTG. In terms of assembly, interacts with histone deacetylases HDAC4, HDAC6, and SIRT2, HDAC activity is required for antiaggregation. As to expression, widely expressed. Highest levels in testis and brain, and lower levels in heart, spleen, intestine, ovary, placenta, lung, kidney, pancreas, thymus, prostate, skeletal muscle, liver and leukocytes. In testis, expressed in germ cells in the earlier stages of differentiation pathway as well as in spermatids. In brain, expressed at a higher level in hippocampus and thalamus and a lower level in amygdala, substantia nigra, corpus callosum and caudate nucleus.

Its subcellular location is the cytoplasm. The protein localises to the perinuclear region. It is found in the nucleus. The protein resides in the myofibril. It localises to the sarcomere. Its subcellular location is the z line. In terms of biological role, has a stimulatory effect on the ATPase activity of HSP70 in a dose-dependent and time-dependent manner and hence acts as a co-chaperone of HSP70. Plays an indispensable role in the organization of KRT8/KRT18 filaments. Acts as an endogenous molecular chaperone for neuronal proteins including huntingtin. Suppresses aggregation and toxicity of polyglutamine-containing, aggregation-prone proteins. Also reduces cellular toxicity and caspase-3 activity. Functionally, isoform B but not isoform A inhibits huntingtin aggregation. This chain is DnaJ homolog subfamily B member 6 (DNAJB6), found in Homo sapiens (Human).